A 1439-amino-acid chain; its full sequence is Gag-Pol polyprotein (1439 aa).

Gly-2 carries the N-myristoyl glycine; by host lipid modification. The interaction with Gp41 stretch occupies residues 7 to 31 (VLSGGELDRWEKIRLRPGGKKKYRL). The tract at residues 8-43 (LSGGELDRWEKIRLRPGGKKKYRLKHIVWASRELER) is interaction with host CALM1. Residues 12 to 19 (ELDRWEKI) form an interaction with host AP3D1 region. The tract at residues 14–33 (DRWEKIRLRPGGKKKYRLKH) is interaction with membrane phosphatidylinositol 4,5-bisphosphate and RNA. The Nuclear export signal motif lies at 16 to 22 (WEKIRLR). A Nuclear localization signal motif is present at residues 26–32 (KKKYRLK). The interaction with membrane phosphatidylinositol 4,5-bisphosphate stretch occupies residues 73-77 (EELTS). The tract at residues 106 to 128 (EEQTKSMKKAQQAAADTGNSSQV) is disordered. Tyr-132 bears the Phosphotyrosine; by host mark. The tract at residues 189-227 (NTVGGHQAAMQMLKETINEEAAEWDRLHPVHAGPIAPGQ) is interaction with human PPIA/CYPA and NUP153. The segment at 277-363 (YSPVSILDIR…GGPGHKARVL (87 aa)) is dimerization/Multimerization of capsid protein p24. 2 CCHC-type zinc fingers span residues 390–407 (VKCF…NCRA) and 411–428 (KGCW…ECTE). Residues 493–497 (PQITL) are dimerization of protease. A Peptidase A2 domain is found at 512-581 (KEALLDTGAD…TPVNIIGRNL (70 aa)). Asp-517 acts as the For protease activity; shared with dimeric partner in catalysis. Dimerization of protease stretches follow at residues 541–547 (GIGGFIK) and 580–592 (NLLT…LNFP). The Reverse transcriptase domain occupies 635 to 825 (EGKISKIGPE…PPFLWMGYEL (191 aa)). The Mg(2+) site is built by Asp-701, Asp-776, and Asp-777. Residues 818 to 826 (FLWMGYELH) form an RT 'primer grip' region. The Tryptophan repeat motif motif lies at 989 to 1005 (WETWWTEYWQATWIPEW). In terms of domain architecture, RNase H type-1 spans 1025-1148 (IVGAETFYVD…VDKLVSAGIR (124 aa)). Positions 1034, 1069, 1089, and 1140 each coordinate Mg(2+). The segment at 1154–1195 (DGIDKAQEDHEKYHSNWRAMASDFNLPPIVAKEIVASCDKCQ) adopts an Integrase-type zinc-finger fold. Zn(2+) is bound by residues His-1163, His-1167, Cys-1191, and Cys-1194. An Integrase catalytic domain is found at 1205 to 1355 (VDCSPGIWQL…SAGERIIDII (151 aa)). 3 residues coordinate Mg(2+): Asp-1215, Asp-1267, and Glu-1303. The integrase-type DNA-binding region spans 1374 to 1421 (FRVYYRDNRDPIWKGPAKLLWKGEGAVVIQDNSDIKVVPRRKVKIIRD).

As to quaternary structure, homotrimer; further assembles as hexamers of trimers. Interacts with gp41 (via C-terminus). Interacts with host CALM1; this interaction induces a conformational change in the Matrix protein, triggering exposure of the myristate group. Interacts with host AP3D1; this interaction allows the polyprotein trafficking to multivesicular bodies during virus assembly. Part of the pre-integration complex (PIC) which is composed of viral genome, matrix protein, Vpr and integrase. In terms of assembly, homodimer; the homodimer further multimerizes as homohexamers or homopentamers. Interacts with human PPIA/CYPA; This interaction stabilizes the capsid. Interacts with human NUP153. Interacts with host PDZD8; this interaction stabilizes the capsid. Interacts with monkey TRIM5; this interaction destabilizes the capsid. Homodimer, whose active site consists of two apposed aspartic acid residues. As to quaternary structure, heterodimer of p66 RT and p51 RT (RT p66/p51). Heterodimerization of RT is essential for DNA polymerase activity. The overall folding of the subdomains is similar in p66 RT and p51 RT but the spatial arrangements of the subdomains are dramatically different. In terms of assembly, homotetramer; may further associate as a homohexadecamer. Part of the pre-integration complex (PIC) which is composed of viral genome, matrix protein, Vpr and integrase. Interacts with human SMARCB1/INI1 and human PSIP1/LEDGF isoform 1. Interacts with human KPNA3; this interaction might play a role in nuclear import of the pre-integration complex. Interacts with human NUP153; this interaction might play a role in nuclear import of the pre-integration complex. The cofactor is Mg(2+). In terms of processing, specific enzymatic cleavages by the viral protease yield mature proteins. The protease is released by autocatalytic cleavage. The polyprotein is cleaved during and after budding, this process is termed maturation. Proteolytic cleavage of p66 RT removes the RNase H domain to yield the p51 RT subunit. Nucleocapsid protein p7 might be further cleaved after virus entry. Post-translationally, tyrosine phosphorylated presumably in the virion by a host kinase. Phosphorylation is apparently not a major regulator of membrane association. Phosphorylated possibly by host MAPK1; this phosphorylation is necessary for Pin1-mediated virion uncoating. In terms of processing, methylated by host PRMT6, impairing its function by reducing RNA annealing and the initiation of reverse transcription.

The protein localises to the host cell membrane. The protein resides in the host endosome. Its subcellular location is the host multivesicular body. It localises to the virion membrane. It is found in the host nucleus. The protein localises to the host cytoplasm. The protein resides in the virion. The catalysed reaction is Specific for a P1 residue that is hydrophobic, and P1' variable, but often Pro.. It carries out the reaction Endohydrolysis of RNA in RNA/DNA hybrids. Three different cleavage modes: 1. sequence-specific internal cleavage of RNA. Human immunodeficiency virus type 1 and Moloney murine leukemia virus enzymes prefer to cleave the RNA strand one nucleotide away from the RNA-DNA junction. 2. RNA 5'-end directed cleavage 13-19 nucleotides from the RNA end. 3. DNA 3'-end directed cleavage 15-20 nucleotides away from the primer terminus.. The enzyme catalyses 3'-end directed exonucleolytic cleavage of viral RNA-DNA hybrid.. It catalyses the reaction DNA(n) + a 2'-deoxyribonucleoside 5'-triphosphate = DNA(n+1) + diphosphate. With respect to regulation, protease: The viral protease is inhibited by many synthetic protease inhibitors (PIs), such as amprenavir, atazanavir, indinavir, loprinavir, nelfinavir, ritonavir and saquinavir. Use of protease inhibitors in tritherapy regimens permit more ambitious therapeutic strategies. Reverse transcriptase/ribonuclease H: RT can be inhibited either by nucleoside RT inhibitors (NRTIs) or by non nucleoside RT inhibitors (NNRTIs). NRTIs act as chain terminators, whereas NNRTIs inhibit DNA polymerization by binding a small hydrophobic pocket near the RT active site and inducing an allosteric change in this region. Classical NRTIs are abacavir, adefovir (PMEA), didanosine (ddI), lamivudine (3TC), stavudine (d4T), tenofovir (PMPA), zalcitabine (ddC), and zidovudine (AZT). Classical NNRTIs are atevirdine (BHAP U-87201E), delavirdine, efavirenz (DMP-266), emivirine (I-EBU), and nevirapine (BI-RG-587). The tritherapies used as a basic effective treatment of AIDS associate two NRTIs and one NNRTI. Mediates, with Gag polyprotein, the essential events in virion assembly, including binding the plasma membrane, making the protein-protein interactions necessary to create spherical particles, recruiting the viral Env proteins, and packaging the genomic RNA via direct interactions with the RNA packaging sequence (Psi). Gag-Pol polyprotein may regulate its own translation, by the binding genomic RNA in the 5'-UTR. At low concentration, the polyprotein would promote translation, whereas at high concentration, the polyprotein would encapsidate genomic RNA and then shut off translation. In terms of biological role, targets the polyprotein to the plasma membrane via a multipartite membrane-binding signal, that includes its myristoylated N-terminus. Matrix protein is part of the pre-integration complex. Implicated in the release from host cell mediated by Vpu. Binds to RNA. Functionally, forms the conical core that encapsulates the genomic RNA-nucleocapsid complex in the virion. Most core are conical, with only 7% tubular. The core is constituted by capsid protein hexamer subunits. The core is disassembled soon after virion entry. Host restriction factors such as TRIM5-alpha or TRIMCyp bind retroviral capsids and cause premature capsid disassembly, leading to blocks in reverse transcription. Capsid restriction by TRIM5 is one of the factors which restricts HIV-1 to the human species. Host PIN1 apparently facilitates the virion uncoating. On the other hand, interactions with PDZD8 or CYPA stabilize the capsid. Its function is as follows. Encapsulates and protects viral dimeric unspliced genomic RNA (gRNA). Binds these RNAs through its zinc fingers. Acts as a nucleic acid chaperone which is involved in rearangement of nucleic acid secondary structure during gRNA retrotranscription. Also facilitates template switch leading to recombination. As part of the polyprotein, participates in gRNA dimerization, packaging, tRNA incorporation and virion assembly. Aspartyl protease that mediates proteolytic cleavages of Gag and Gag-Pol polyproteins during or shortly after the release of the virion from the plasma membrane. Cleavages take place as an ordered, step-wise cascade to yield mature proteins. This process is called maturation. Displays maximal activity during the budding process just prior to particle release from the cell. Also cleaves Nef and Vif, probably concomitantly with viral structural proteins on maturation of virus particles. Hydrolyzes host EIF4GI and PABP1 in order to shut off the capped cellular mRNA translation. The resulting inhibition of cellular protein synthesis serves to ensure maximal viral gene expression and to evade host immune response. Also mediates cleavage of host YTHDF3. Mediates cleavage of host CARD8, thereby activating the CARD8 inflammasome, leading to the clearance of latent HIV-1 in patient CD4(+) T-cells after viral reactivation; in contrast, HIV-1 can evade CARD8-sensing when its protease remains inactive in infected cells prior to viral budding. In terms of biological role, multifunctional enzyme that converts the viral RNA genome into dsDNA in the cytoplasm, shortly after virus entry into the cell. This enzyme displays a DNA polymerase activity that can copy either DNA or RNA templates, and a ribonuclease H (RNase H) activity that cleaves the RNA strand of RNA-DNA heteroduplexes in a partially processive 3' to 5' endonucleasic mode. Conversion of viral genomic RNA into dsDNA requires many steps. A tRNA(3)-Lys binds to the primer-binding site (PBS) situated at the 5'-end of the viral RNA. RT uses the 3' end of the tRNA primer to perform a short round of RNA-dependent minus-strand DNA synthesis. The reading proceeds through the U5 region and ends after the repeated (R) region which is present at both ends of viral RNA. The portion of the RNA-DNA heteroduplex is digested by the RNase H, resulting in a ssDNA product attached to the tRNA primer. This ssDNA/tRNA hybridizes with the identical R region situated at the 3' end of viral RNA. This template exchange, known as minus-strand DNA strong stop transfer, can be either intra- or intermolecular. RT uses the 3' end of this newly synthesized short ssDNA to perform the RNA-dependent minus-strand DNA synthesis of the whole template. RNase H digests the RNA template except for two polypurine tracts (PPTs) situated at the 5'-end and near the center of the genome. It is not clear if both polymerase and RNase H activities are simultaneous. RNase H probably can proceed both in a polymerase-dependent (RNA cut into small fragments by the same RT performing DNA synthesis) and a polymerase-independent mode (cleavage of remaining RNA fragments by free RTs). Secondly, RT performs DNA-directed plus-strand DNA synthesis using the PPTs that have not been removed by RNase H as primers. PPTs and tRNA primers are then removed by RNase H. The 3' and 5' ssDNA PBS regions hybridize to form a circular dsDNA intermediate. Strand displacement synthesis by RT to the PBS and PPT ends produces a blunt ended, linear dsDNA copy of the viral genome that includes long terminal repeats (LTRs) at both ends. Functionally, catalyzes viral DNA integration into the host chromosome, by performing a series of DNA cutting and joining reactions. This enzyme activity takes place after virion entry into a cell and reverse transcription of the RNA genome in dsDNA. The first step in the integration process is 3' processing. This step requires a complex comprising the viral genome, matrix protein, Vpr and integrase. This complex is called the pre-integration complex (PIC). The integrase protein removes 2 nucleotides from each 3' end of the viral DNA, leaving recessed CA OH's at the 3' ends. In the second step, the PIC enters cell nucleus. This process is mediated through integrase and Vpr proteins, and allows the virus to infect a non dividing cell. This ability to enter the nucleus is specific of lentiviruses, other retroviruses cannot and rely on cell division to access cell chromosomes. In the third step, termed strand transfer, the integrase protein joins the previously processed 3' ends to the 5' ends of strands of target cellular DNA at the site of integration. The 5'-ends are produced by integrase-catalyzed staggered cuts, 5 bp apart. A Y-shaped, gapped, recombination intermediate results, with the 5'-ends of the viral DNA strands and the 3' ends of target DNA strands remaining unjoined, flanking a gap of 5 bp. The last step is viral DNA integration into host chromosome. This involves host DNA repair synthesis in which the 5 bp gaps between the unjoined strands are filled in and then ligated. Since this process occurs at both cuts flanking the HIV genome, a 5 bp duplication of host DNA is produced at the ends of HIV-1 integration. Alternatively, Integrase may catalyze the excision of viral DNA just after strand transfer, this is termed disintegration. The protein is Gag-Pol polyprotein (gag-pol) of Human immunodeficiency virus type 1 group M subtype B (isolate JRCSF) (HIV-1).